The sequence spans 254 residues: Proteasome activator complex subunit 3 (254 aa).

A2 is modified (N-acetylalanine). A phosphoserine mark is found at S17 and S24. At K195 the chain carries N6-acetyllysine; by P300/CBP. The residue at position 247 (S247) is a Phosphoserine; by CHEK2.

Belongs to the PA28 family. In terms of assembly, homoheptamer; the stability of the heptamer is essential for the specific activation of the trypsine-like subunit and inhibition of the chymotrypsin-like and postglutamyl-preferring (PGPH) subunits of the proteasome. Interacts with p53/TP53 and MDM2. Interacts with MAP3K3. Associates with the proteasome. Interacts with CCAR2. Interacts with PSME3IP1 (via C-terminus); the interaction is direct and promotes the association of PSME3 with the 20S proteasome. Interacts with COIL; the interaction is inhibited by PSME3IP1. As to quaternary structure, (Microbial infection) Interacts with human cytomegalovirus UL27. Post-translationally, phosphorylated by MAP3K3. Phosphorylation at Ser-247 promotes its association with CCAR2. In terms of processing, acetylation at the major site Lys-195 is important for oligomerization and ability to degrade its target substrates. Deacetylated by SIRT1.

It localises to the nucleus. It is found in the cytoplasm. Its function is as follows. Subunit of the 11S REG-gamma (also called PA28-gamma) proteasome regulator, a doughnut-shaped homoheptamer which associates with the proteasome. 11S REG-gamma activates the trypsin-like catalytic subunit of the proteasome but inhibits the chymotrypsin-like and postglutamyl-preferring (PGPH) subunits. Facilitates the MDM2-p53/TP53 interaction which promotes ubiquitination- and MDM2-dependent proteasomal degradation of p53/TP53, limiting its accumulation and resulting in inhibited apoptosis after DNA damage. May also be involved in cell cycle regulation. Mediates CCAR2 and CHEK2-dependent SIRT1 inhibition. The chain is Proteasome activator complex subunit 3 (PSME3) from Homo sapiens (Human).